The sequence spans 146 residues: Deoxyuridine 5'-triphosphate nucleotidohydrolase (146 aa).

Residues 65 to 67 (RSG), asparagine 78, and 82 to 84 (TID) contribute to the substrate site.

This sequence belongs to the dUTPase family. Mg(2+) is required as a cofactor.

It carries out the reaction dUTP + H2O = dUMP + diphosphate + H(+). Its pathway is pyrimidine metabolism; dUMP biosynthesis; dUMP from dCTP (dUTP route): step 2/2. This enzyme is involved in nucleotide metabolism: it produces dUMP, the immediate precursor of thymidine nucleotides and it decreases the intracellular concentration of dUTP so that uracil cannot be incorporated into DNA. The sequence is that of Deoxyuridine 5'-triphosphate nucleotidohydrolase from Treponema pallidum subsp. pallidum (strain SS14).